The chain runs to 278 residues: Urease accessory protein UreD (278 aa).

Belongs to the UreD family. In terms of assembly, ureD, UreF and UreG form a complex that acts as a GTP-hydrolysis-dependent molecular chaperone, activating the urease apoprotein by helping to assemble the nickel containing metallocenter of UreC. The UreE protein probably delivers the nickel.

Its subcellular location is the cytoplasm. Its function is as follows. Required for maturation of urease via the functional incorporation of the urease nickel metallocenter. The sequence is that of Urease accessory protein UreD from Escherichia coli.